Here is a 156-residue protein sequence, read N- to C-terminus: ATP synthase subunit b (156 aa).

A helical membrane pass occupies residues 7–29 (LFAQMVVFLVLAWFTMKFVWPPL).

Belongs to the ATPase B chain family. F-type ATPases have 2 components, F(1) - the catalytic core - and F(0) - the membrane proton channel. F(1) has five subunits: alpha(3), beta(3), gamma(1), delta(1), epsilon(1). F(0) has three main subunits: a(1), b(2) and c(10-14). The alpha and beta chains form an alternating ring which encloses part of the gamma chain. F(1) is attached to F(0) by a central stalk formed by the gamma and epsilon chains, while a peripheral stalk is formed by the delta and b chains.

It is found in the cell inner membrane. F(1)F(0) ATP synthase produces ATP from ADP in the presence of a proton or sodium gradient. F-type ATPases consist of two structural domains, F(1) containing the extramembraneous catalytic core and F(0) containing the membrane proton channel, linked together by a central stalk and a peripheral stalk. During catalysis, ATP synthesis in the catalytic domain of F(1) is coupled via a rotary mechanism of the central stalk subunits to proton translocation. In terms of biological role, component of the F(0) channel, it forms part of the peripheral stalk, linking F(1) to F(0). In Burkholderia cenocepacia (strain ATCC BAA-245 / DSM 16553 / LMG 16656 / NCTC 13227 / J2315 / CF5610) (Burkholderia cepacia (strain J2315)), this protein is ATP synthase subunit b.